We begin with the raw amino-acid sequence, 386 residues long: Phosphoglycerate kinase (386 aa).

Substrate-binding positions include 21–23 (DLN), arginine 36, 59–62 (HLGR), arginine 113, and arginine 146. ATP contacts are provided by residues lysine 197, glutamate 314, and 340–343 (GGDT).

It belongs to the phosphoglycerate kinase family. In terms of assembly, monomer.

It localises to the cytoplasm. It catalyses the reaction (2R)-3-phosphoglycerate + ATP = (2R)-3-phospho-glyceroyl phosphate + ADP. Its pathway is carbohydrate degradation; glycolysis; pyruvate from D-glyceraldehyde 3-phosphate: step 2/5. The protein is Phosphoglycerate kinase of Vibrio vulnificus (strain CMCP6).